A 373-amino-acid polypeptide reads, in one-letter code: Carbamoyl phosphate synthase small chain (373 aa).

A CPSase region spans residues 1–179 (MSGKAQLVLE…AYIVEPEGPP (179 aa)). Positions 47, 230, and 232 each coordinate L-glutamine. In terms of domain architecture, Glutamine amidotransferase type-1 spans 182–373 (TVAALDLGIK…QFIELMEGDR (192 aa)). Cys258 (nucleophile) is an active-site residue. L-glutamine-binding residues include Phe259, Gln262, Asn300, Gly302, and Phe303. Catalysis depends on residues His348 and Glu350.

It belongs to the CarA family. Composed of two chains; the small (or glutamine) chain promotes the hydrolysis of glutamine to ammonia, which is used by the large (or ammonia) chain to synthesize carbamoyl phosphate. Tetramer of heterodimers (alpha,beta)4.

The enzyme catalyses hydrogencarbonate + L-glutamine + 2 ATP + H2O = carbamoyl phosphate + L-glutamate + 2 ADP + phosphate + 2 H(+). It carries out the reaction L-glutamine + H2O = L-glutamate + NH4(+). Its pathway is amino-acid biosynthesis; L-arginine biosynthesis; carbamoyl phosphate from bicarbonate: step 1/1. It participates in pyrimidine metabolism; UMP biosynthesis via de novo pathway; (S)-dihydroorotate from bicarbonate: step 1/3. In terms of biological role, small subunit of the glutamine-dependent carbamoyl phosphate synthetase (CPSase). CPSase catalyzes the formation of carbamoyl phosphate from the ammonia moiety of glutamine, carbonate, and phosphate donated by ATP, constituting the first step of 2 biosynthetic pathways, one leading to arginine and/or urea and the other to pyrimidine nucleotides. The small subunit (glutamine amidotransferase) binds and cleaves glutamine to supply the large subunit with the substrate ammonia. The protein is Carbamoyl phosphate synthase small chain of Mycolicibacterium paratuberculosis (strain ATCC BAA-968 / K-10) (Mycobacterium paratuberculosis).